A 298-amino-acid polypeptide reads, in one-letter code: HTH-type transcriptional regulator ArgP (298 aa).

The HTH lysR-type domain maps to 4–60 (LDYRWIEALDSVVSKGSFERAAEQLFISQSAVSQRIKQLEKYLAQPVLIREQPPRPT). Residues 21–40 (FERAAEQLFISQSAVSQRIK) constitute a DNA-binding region (H-T-H motif).

This sequence belongs to the LysR transcriptional regulatory family. In terms of assembly, homodimer.

In terms of biological role, controls the transcription of genes involved in arginine and lysine metabolism. The protein is HTH-type transcriptional regulator ArgP of Vibrio cholerae serotype O1 (strain ATCC 39315 / El Tor Inaba N16961).